The sequence spans 328 residues: tRNA U34 carboxymethyltransferase (328 aa).

Carboxy-S-adenosyl-L-methionine-binding positions include lysine 91, tryptophan 105, lysine 110, glycine 130, 152-154 (DPS), methionine 196, tyrosine 200, and arginine 315.

This sequence belongs to the class I-like SAM-binding methyltransferase superfamily. CmoB family. Homotetramer.

It catalyses the reaction carboxy-S-adenosyl-L-methionine + 5-hydroxyuridine(34) in tRNA = 5-carboxymethoxyuridine(34) in tRNA + S-adenosyl-L-homocysteine + H(+). Functionally, catalyzes carboxymethyl transfer from carboxy-S-adenosyl-L-methionine (Cx-SAM) to 5-hydroxyuridine (ho5U) to form 5-carboxymethoxyuridine (cmo5U) at position 34 in tRNAs. This Psychromonas ingrahamii (strain DSM 17664 / CCUG 51855 / 37) protein is tRNA U34 carboxymethyltransferase.